Consider the following 261-residue polypeptide: Adenosylcobinamide-GDP ribazoletransferase (261 aa).

The next 7 membrane-spanning stretches (helical) occupy residues 4–26, 40–60, 62–82, 110–130, 140–160, 197–217, and 237–257; these read GLNG…QIPW, LTGL…SPFL, PLVL…GLHL, VGAF…LLLM, FTWL…VQLI, CFLL…IWLF, and IGAS…TFFL.

This sequence belongs to the CobS family. Mg(2+) is required as a cofactor.

The protein resides in the cell membrane. It carries out the reaction alpha-ribazole + adenosylcob(III)inamide-GDP = adenosylcob(III)alamin + GMP + H(+). The enzyme catalyses alpha-ribazole 5'-phosphate + adenosylcob(III)inamide-GDP = adenosylcob(III)alamin 5'-phosphate + GMP + H(+). It functions in the pathway cofactor biosynthesis; adenosylcobalamin biosynthesis; adenosylcobalamin from cob(II)yrinate a,c-diamide: step 7/7. Functionally, joins adenosylcobinamide-GDP and alpha-ribazole to generate adenosylcobalamin (Ado-cobalamin). Also synthesizes adenosylcobalamin 5'-phosphate from adenosylcobinamide-GDP and alpha-ribazole 5'-phosphate. The polypeptide is Adenosylcobinamide-GDP ribazoletransferase (Halalkalibacterium halodurans (strain ATCC BAA-125 / DSM 18197 / FERM 7344 / JCM 9153 / C-125) (Bacillus halodurans)).